A 515-amino-acid chain; its full sequence is Probable cytochrome P450 4p3 (515 aa).

E322 and C461 together coordinate heme.

It belongs to the cytochrome P450 family. Heme serves as cofactor.

Its subcellular location is the endoplasmic reticulum membrane. The protein localises to the microsome membrane. Its function is as follows. May be involved in the metabolism of insect hormones and in the breakdown of synthetic insecticides. This chain is Probable cytochrome P450 4p3 (Cyp4p3), found in Drosophila melanogaster (Fruit fly).